The primary structure comprises 115 residues: Allergen Tha p 2 (115 aa).

An N-terminal signal peptide occupies residues Met1–Ser15.

The polypeptide is Allergen Tha p 2 (Thaumetopoea pityocampa (Pine processionary moth)).